We begin with the raw amino-acid sequence, 504 residues long: Potassium voltage-gated channel subfamily V member 1 (504 aa).

Disordered regions lie at residues 1 to 22 (MDLS…GGSL) and 172 to 193 (KKDT…QGPC). The Cytoplasmic portion of the chain corresponds to 1 to 214 (MDLSPRNRPL…EKPGSSTAAR (214 aa)). Over residues 10 to 22 (LLESSSLDSGGSL) the composition is skewed to low complexity. The span at 172-185 (KKDTDDQESQHESE) shows a compositional bias: basic and acidic residues. Residues 215–235 (IFGVISIIFVAVSIVNMALMS) form a helical membrane-spanning segment. The Extracellular segment spans residues 236–242 (AELSWLN). The helical transmembrane segment at 243 to 263 (LQLLEILEYVCISWFTGEFIL) threads the bilayer. The Cytoplasmic portion of the chain corresponds to 264 to 280 (RFLCVKDRCRFLRKVPN). A helical membrane pass occupies residues 281 to 301 (IIDLLAILPFYITLLVESLSG). The Extracellular segment spans residues 302–313 (SHTTQELENVGR). The helical; Voltage-sensor transmembrane segment at 314-335 (LVQVLRLLRALRMLKLGRHSTG) threads the bilayer. Residues 336-349 (LRSLGMTITQCYEE) lie on the Cytoplasmic side of the membrane. A helical membrane pass occupies residues 350–370 (VGLLLLFLSVGISIFSTIEYF). Residues 396 to 401 (TVGYGD) carry the Selectivity filter motif. The chain crosses the membrane as a helical span at residues 411-431 (IVAFMCILSGILVLALPIAII). The Cytoplasmic segment spans residues 432–504 (NDRFSACYFT…RSSGGDDFWF (73 aa)).

It belongs to the potassium channel family. V (TC 1.A.1.2) subfamily. Kv8.1/KCNV1 sub-subfamily. As to quaternary structure, heteromultimer with KCNB1 and KCNB2. Interacts with KCNC4 and KCND1. In terms of tissue distribution, detected in brain, throughout layers II, IV and VI of the brain cortex. Detected in cerebellum and hippocampus, in the granule cell layer, Purkinje cell layer, pyramidal cell layer and dentate gyrus. Detected at lower levels in olfactory bulb, amygdala, thalamus, hypothalamus, midbrain and brainstem.

It is found in the cell membrane. Functionally, potassium channel subunit that does not form functional channels by itself. Modulates KCNB1 and KCNB2 channel activity by shifting the threshold for inactivation to more negative values and by slowing the rate of inactivation. Can down-regulate the channel activity of KCNB1, KCNB2, KCNC4 and KCND1, possibly by trapping them in intracellular membranes. In Mesocricetus auratus (Golden hamster), this protein is Potassium voltage-gated channel subfamily V member 1 (KCNV1).